The chain runs to 648 residues: NAD(P)H-quinone oxidoreductase subunit 5, chloroplastic (648 aa).

The next 16 helical transmembrane spans lie at 7–27 (AIWL…IGLL), 39–59 (LHGA…LGVL), 89–109 (VDPL…LVMI), 124–144 (FFVY…SPNL), 147–167 (VYGF…FWFT), 189–209 (LLLG…ASIA), 215–235 (LLIA…LVFM), 258–278 (TPIS…FLVA), 289–309 (LVME…ATMA), 327–347 (LGYM…FHLT), 354–374 (ALLF…VGFS), 395–415 (AMTF…ACFW), 432–452 (WLIA…IYFL), 472–492 (LGMV…GSLG), 518–538 (LAEF…GISL), and 625–645 (FYIL…TTHL).

The protein belongs to the complex I subunit 5 family. In terms of assembly, NDH is composed of at least 16 different subunits, 5 of which are encoded in the nucleus.

The protein resides in the plastid. Its subcellular location is the chloroplast thylakoid membrane. It catalyses the reaction a plastoquinone + NADH + (n+1) H(+)(in) = a plastoquinol + NAD(+) + n H(+)(out). The enzyme catalyses a plastoquinone + NADPH + (n+1) H(+)(in) = a plastoquinol + NADP(+) + n H(+)(out). Its function is as follows. NDH shuttles electrons from NAD(P)H:plastoquinone, via FMN and iron-sulfur (Fe-S) centers, to quinones in the photosynthetic chain and possibly in a chloroplast respiratory chain. The immediate electron acceptor for the enzyme in this species is believed to be plastoquinone. Couples the redox reaction to proton translocation, and thus conserves the redox energy in a proton gradient. The polypeptide is NAD(P)H-quinone oxidoreductase subunit 5, chloroplastic (ndhF) (Nephroselmis olivacea (Green alga)).